The sequence spans 234 residues: Serum amyloid P-component (234 aa).

A signal peptide spans 1–22 (MDKLLSLLGVSILAGLLLEAFA). The Pentraxin (PTX) domain occupies 27-226 (TGKVFVFPRQ…YAVIRPRCVA (200 aa)). Residue Asn-54 is glycosylated (N-linked (GlcNAc...) asparagine). Cys-58 and Cys-117 are disulfide-bonded. Positions 81, 158, 159, 160, and 170 each coordinate Ca(2+).

This sequence belongs to the pentraxin family. In terms of assembly, homopentamer. Pentraxin (or pentaxin) have a discoid arrangement of 5 non-covalently bound subunits. The cofactor is Ca(2+).

The protein resides in the secreted. The chain is Serum amyloid P-component (APCS) from Mesocricetus auratus (Golden hamster).